Consider the following 371-residue polypeptide: Protein NDRG2 (371 aa).

Positions 1–22 are disordered; that stretch reads MAELQEVQITEEKPLLPGQTPE. Ala2 carries the post-translational modification N-acetylalanine. Phosphothreonine is present on Thr20. A phosphoserine mark is found at Ser326 and Ser328. Thr330 carries the phosphothreonine; by SGK1 modification. Ser332 carries the post-translational modification Phosphoserine; by PKC/PRKCQ or SGK1. Thr334 carries the post-translational modification Phosphothreonine. The tract at residues 334–371 is disordered; the sequence is TSAASIDGSRSRSRTLSQSSESGTLPSGPPGHTMEVSC. Phosphoserine occurs at positions 335, 338, and 344. A Phosphothreonine; by PKB/AKT1 or SGK1 modification is found at Thr348. 4 positions are modified to phosphoserine: Ser350, Ser352, Ser353, and Ser355. Residue Thr357 is modified to Phosphothreonine. Ser370 carries the phosphoserine modification.

The protein belongs to the NDRG family. As to quaternary structure, interacts with CTNNB1. In terms of tissue distribution, expressed at highest levels in brain, heart and liver, and at lower levels in kidney, colon, skeletal muscle, adrenal gland, ovary and uterus (at protein level).

The protein resides in the cytoplasm. It is found in the perinuclear region. Its subcellular location is the cell projection. It localises to the growth cone. In terms of biological role, contributes to the regulation of the Wnt signaling pathway. Down-regulates CTNNB1-mediated transcriptional activation of target genes, such as CCND1, and may thereby act as tumor suppressor. May be involved in dendritic cell and neuron differentiation. This is Protein NDRG2 (Ndrg2) from Mus musculus (Mouse).